The primary structure comprises 305 residues: Glycine--tRNA ligase alpha subunit (305 aa).

Belongs to the class-II aminoacyl-tRNA synthetase family. Tetramer of two alpha and two beta subunits.

Its subcellular location is the cytoplasm. The catalysed reaction is tRNA(Gly) + glycine + ATP = glycyl-tRNA(Gly) + AMP + diphosphate. The chain is Glycine--tRNA ligase alpha subunit from Streptococcus pneumoniae serotype 4 (strain ATCC BAA-334 / TIGR4).